The chain runs to 154 residues: Transcriptional repressor NrdR (154 aa).

A zinc finger lies at 3-34; sequence CPFCSHNDSKVIDSRPTDEGQAIRRRRECISC. One can recognise an ATP-cone domain in the interval 49-139; sequence LIVVKKNGNR…VYREFKDINT (91 aa).

This sequence belongs to the NrdR family. The cofactor is Zn(2+).

Negatively regulates transcription of bacterial ribonucleotide reductase nrd genes and operons by binding to NrdR-boxes. In Alkaliphilus oremlandii (strain OhILAs) (Clostridium oremlandii (strain OhILAs)), this protein is Transcriptional repressor NrdR.